We begin with the raw amino-acid sequence, 302 residues long: Uricase (302 aa).

Catalysis depends on charge relay system residues lysine 22 and threonine 67. 6 residues coordinate urate: threonine 67, aspartate 68, phenylalanine 163, arginine 180, glutamine 223, and asparagine 249. The active-site Charge relay system is histidine 251.

It belongs to the uricase family. In terms of assembly, homotetramer.

The catalysed reaction is urate + O2 + H2O = 5-hydroxyisourate + H2O2. It participates in purine metabolism; urate degradation; (S)-allantoin from urate: step 1/3. Its function is as follows. Catalyzes the oxidation of uric acid to 5-hydroxyisourate, which is further processed to form (S)-allantoin. In Arthrobacter globiformis, this protein is Uricase (uox).